Consider the following 427-residue polypeptide: Serine--tRNA ligase (427 aa).

231-233 contributes to the L-serine binding site; sequence TAE. Residues 262 to 264 and Val278 contribute to the ATP site; that span reads RRE. Residue Glu285 coordinates L-serine. 349–352 contacts ATP; sequence EVSS. Ser384 is a binding site for L-serine.

This sequence belongs to the class-II aminoacyl-tRNA synthetase family. Type-1 seryl-tRNA synthetase subfamily. As to quaternary structure, homodimer. The tRNA molecule binds across the dimer.

It is found in the cytoplasm. It carries out the reaction tRNA(Ser) + L-serine + ATP = L-seryl-tRNA(Ser) + AMP + diphosphate + H(+). The enzyme catalyses tRNA(Sec) + L-serine + ATP = L-seryl-tRNA(Sec) + AMP + diphosphate + H(+). Its pathway is aminoacyl-tRNA biosynthesis; selenocysteinyl-tRNA(Sec) biosynthesis; L-seryl-tRNA(Sec) from L-serine and tRNA(Sec): step 1/1. Catalyzes the attachment of serine to tRNA(Ser). Is also able to aminoacylate tRNA(Sec) with serine, to form the misacylated tRNA L-seryl-tRNA(Sec), which will be further converted into selenocysteinyl-tRNA(Sec). This chain is Serine--tRNA ligase, found in Chlamydia pneumoniae (Chlamydophila pneumoniae).